A 345-amino-acid polypeptide reads, in one-letter code: CCAAT/enhancer-binding protein beta (345 aa).

Positions 1–24 (MQRLVAWDPACLPLPPPPPAFKSM) are required for Lys-174 sumoylation. Arg-3 is modified (asymmetric dimethylarginine; by CARM1). The tract at residues 24-135 (MEVANFYYEA…YGGKNCKKPA (112 aa)) is required for MYC transcriptional repression. Residue Lys-43 is modified to N6-acetyllysine; alternate. Lys-43 carries the post-translational modification N6-methylated lysine; alternate. Disordered regions lie at residues 46-67 (PAAP…GSIG) and 79-116 (LEPL…QHHD). Residues 47–59 (AAPPAARPGPRPP) show a composition bias toward pro residues. Residues 84–100 (APQAPAPATATDTFEAA) show a composition bias toward low complexity. The short motif at 116 to 124 (DFLSDLFSD) is the 9aaTAD element. 2 positions are modified to N6-acetyllysine; by KAT2A and KAT2B: Lys-129 and Lys-132. Position 133 is an N6-acetyllysine; by KAT2A and KAT2B; alternate (Lys-133). Lys-133 is covalently cross-linked (Glycyl lysine isopeptide (Lys-Gly) (interchain with G-Cter in SUMO2); alternate). A disordered region spans residues 157–178 (FAPLHPPPPPPPPPAELKAEPG). Pro residues predominate over residues 160-171 (LHPPPPPPPPPA). Lys-174 participates in a covalent cross-link: Glycyl lysine isopeptide (Lys-Gly) (interchain with G-Cter in SUMO2); alternate. Lys-174 participates in a covalent cross-link: Glycyl lysine isopeptide (Lys-Gly) (interchain with G-Cter in SUMO); alternate. Glycyl lysine isopeptide (Lys-Gly) (interchain with G-Cter in SUMO2) cross-links involve residues Lys-185 and Lys-187. Residues 218-232 (SGSSGSLSTSSSSSP) show a composition bias toward low complexity. The disordered stretch occupies residues 218-271 (SGSSGSLSTSSSSSPPGTPSPADAKAPPTACYAGAAPAPSQVKSKAKKTVDKHS). Thr-226 is modified (phosphothreonine; by GSK3-beta). 2 O-linked (GlcNAc) serine glycosylation sites follow: Ser-227 and Ser-228. A Phosphoserine; by GSK3-beta modification is found at Ser-231. Thr-235 carries the phosphothreonine; by RPS6KA1, CDK2 and MAPK modification. Residues Lys-260 and Lys-262 each participate in a glycyl lysine isopeptide (Lys-Gly) (interchain with G-Cter in SUMO2) cross-link. Phosphothreonine; by RPS6KA1 and PKC/PRKCA is present on Thr-266. In terms of domain architecture, bZIP spans 271-334 (SDEYKIRRER…STLRNLFKQL (64 aa)). The basic motif stretch occupies residues 275–295 (KIRRERNNIAVRKSRDKAKMR). Residue Ser-288 is modified to Phosphoserine; by PKC/PRKCA. A leucine-zipper region spans residues 297–304 (LETQHKVL). Ser-325 bears the Phosphoserine; by CaMK2 mark. Residue Lys-332 forms a Glycyl lysine isopeptide (Lys-Gly) (interchain with G-Cter in SUMO2) linkage.

The protein belongs to the bZIP family. C/EBP subfamily. Binds DNA as a homodimer and as a heterodimer. Interacts with ATF4. Binds DNA as a heterodimer with ATF4. Interacts with MYB; within the complex, MYB and CEBPB bind to different promoter regions. Can form stable heterodimers with CEBPD. Can form stable heterodimers with CEBPA and CEBPE. Interacts with SIX1. Isoform 2 and isoform 3 also form heterodimers. Interacts with TRIM28 and PTGES2. Interacts with PRDM16. Interacts with CCDC85B. Forms a complex with THOC5. Interacts with ZNF638; this interaction increases transcriptional activation. Interacts with CIDEA and CIDEC; these interactions increase transcriptional activation of a subset of CEBPB downstream target genes. Interacts with DDIT3/CHOP. Interacts with EP300; recruits EP300 to chromatin. Interacts with RORA; the interaction disrupts interaction with EP300. Interacts (not methylated) with MED23, MED26, SMARCA2, SMARCB1 and SMARCC1. Interacts with KAT2A and KAT2B. Interacts with ATF5; EP300 is required for ATF5 and CEBPB interaction and DNA binding. Interacts with NFE2L1; the heterodimer represses expression of DSPP during odontoblast differentiation. Methylated. Methylation at Arg-3 by CARM1 and at Lys-43 by EHMT2 inhibit transactivation activity. Methylation is probably inhibited by phosphorylation at Thr-235. Post-translationally, sumoylated by polymeric chains of SUMO2 or SUMO3. Sumoylation at Lys-174 is required for inhibition of T-cells proliferation. In adipocytes, sumoylation at Lys-174 by PIAS1 leads to ubiquitination and subsequent proteasomal degradation. Desumoylated by SENP2, which abolishes ubiquitination and stabilizes protein levels. In terms of processing, ubiquitinated, leading to proteasomal degradation. Phosphorylated at Thr-235 by MAPK and CDK2, serves to prime phosphorylation at Thr-226 and Ser-231 by GSK3B and acquire DNA-binding as well as transactivation activities, required to induce adipogenesis. MAPK and CDK2 act sequentially to maintain Thr-235 in the primed phosphorylated state during mitotical cloning expansion and thereby progression of terminal differentiation. Phosphorylation at Thr-266 enhances transactivation activity. Phosphorylation at Ser-325 in response to calcium increases transactivation activity. Phosphorylated at Thr-235 by RPS6KA1. Post-translationally, O-glycosylated, glycosylation at Ser-227 and Ser-228 prevents phosphorylation on Thr-235, Ser-231 and Thr-226 and DNA binding activity which delays the adipocyte differentiation program. In terms of processing, acetylated. Acetylation at Lys-43 is an important and dynamic regulatory event that contributes to its ability to transactivate target genes, including those associated with adipogenesis and adipocyte function. Deacetylation by HDAC1 represses its transactivation activity. Acetylated by KAT2A and KAT2B within a cluster of lysine residues between amino acids 129-133, this acetylation is strongly induced by glucocorticoid treatment and enhances transactivation activity. As to expression, expressed at low levels in the lung, kidney and spleen.

Its subcellular location is the nucleus. The protein localises to the cytoplasm. Important transcription factor regulating the expression of genes involved in immune and inflammatory responses. Also plays a significant role in adipogenesis, as well as in the gluconeogenic pathway, liver regeneration, and hematopoiesis. The consensus recognition site is 5'-T[TG]NNGNAA[TG]-3'. Its functional capacity is governed by protein interactions and post-translational protein modifications. During early embryogenesis, plays essential and redundant roles with CEBPA. Has a promitotic effect on many cell types such as hepatocytes and adipocytes but has an antiproliferative effect on T-cells by repressing MYC expression, facilitating differentiation along the T-helper 2 lineage. Binds to regulatory regions of several acute-phase and cytokines genes and plays a role in the regulation of acute-phase reaction and inflammation. Also plays a role in intracellular bacteria killing. During adipogenesis, is rapidly expressed and, after activation by phosphorylation, induces CEBPA and PPARG, which turn on the series of adipocyte genes that give rise to the adipocyte phenotype. The delayed transactivation of the CEBPA and PPARG genes by CEBPB appears necessary to allow mitotic clonal expansion and thereby progression of terminal differentiation. Essential for female reproduction because of a critical role in ovarian follicle development. Restricts osteoclastogenesis: together with NFE2L1; represses expression of DSPP during odontoblast differentiation. In terms of biological role, essential for gene expression induction in activated macrophages. Plays a major role in immune responses such as CD4(+) T-cell response, granuloma formation and endotoxin shock. Not essential for intracellular bacteria killing. Functionally, acts as a dominant negative through heterodimerization with isoform 2. Promotes osteoblast differentiation and osteoclastogenesis. The chain is CCAAT/enhancer-binding protein beta from Homo sapiens (Human).